A 470-amino-acid polypeptide reads, in one-letter code: Glutamyl-tRNA(Gln) amidotransferase subunit A (470 aa).

Active-site charge relay system residues include K71 and S146. The active-site Acyl-ester intermediate is S170.

It belongs to the amidase family. GatA subfamily. In terms of assembly, heterotrimer of A, B and C subunits.

The enzyme catalyses L-glutamyl-tRNA(Gln) + L-glutamine + ATP + H2O = L-glutaminyl-tRNA(Gln) + L-glutamate + ADP + phosphate + H(+). Its function is as follows. Allows the formation of correctly charged Gln-tRNA(Gln) through the transamidation of misacylated Glu-tRNA(Gln) in organisms which lack glutaminyl-tRNA synthetase. The reaction takes place in the presence of glutamine and ATP through an activated gamma-phospho-Glu-tRNA(Gln). In Akkermansia muciniphila (strain ATCC BAA-835 / DSM 22959 / JCM 33894 / BCRC 81048 / CCUG 64013 / CIP 107961 / Muc), this protein is Glutamyl-tRNA(Gln) amidotransferase subunit A.